The sequence spans 174 residues: Endoribonuclease YbeY (174 aa).

Positions 129, 133, and 139 each coordinate Zn(2+).

It belongs to the endoribonuclease YbeY family. Zn(2+) is required as a cofactor.

The protein resides in the cytoplasm. Single strand-specific metallo-endoribonuclease involved in late-stage 70S ribosome quality control and in maturation of the 3' terminus of the 16S rRNA. The polypeptide is Endoribonuclease YbeY (Lactobacillus delbrueckii subsp. bulgaricus (strain ATCC 11842 / DSM 20081 / BCRC 10696 / JCM 1002 / NBRC 13953 / NCIMB 11778 / NCTC 12712 / WDCM 00102 / Lb 14)).